Consider the following 214-residue polypeptide: Adenylate kinase (214 aa).

Residue Gly10–Thr15 coordinates ATP. The segment at Ser30–Val59 is NMP. AMP is bound by residues Thr31, Arg36, Ala57–Val59, Gly85–Arg88, and Gln92. An LID region spans residues Gly126 to Asp163. Arg127 lines the ATP pocket. Zn(2+) is bound by residues Cys130 and Cys133. Thr136 to Tyr137 serves as a coordination point for ATP. Zn(2+) contacts are provided by Cys150 and Cys153. Positions 160 and 171 each coordinate AMP. ATP is bound at residue Lys199.

It belongs to the adenylate kinase family. Monomer.

The protein localises to the cytoplasm. It carries out the reaction AMP + ATP = 2 ADP. The protein operates within purine metabolism; AMP biosynthesis via salvage pathway; AMP from ADP: step 1/1. Functionally, catalyzes the reversible transfer of the terminal phosphate group between ATP and AMP. Plays an important role in cellular energy homeostasis and in adenine nucleotide metabolism. The protein is Adenylate kinase of Agathobacter rectalis (strain ATCC 33656 / DSM 3377 / JCM 17463 / KCTC 5835 / VPI 0990) (Eubacterium rectale).